A 314-amino-acid polypeptide reads, in one-letter code: Acetyl-coenzyme A carboxylase carboxyl transferase subunit alpha (314 aa).

The region spanning 32 to 289 is the CoA carboxyltransferase C-terminal domain; the sequence is EIDMLEASLK…KKMFLKHLNE (258 aa).

It belongs to the AccA family. In terms of assembly, acetyl-CoA carboxylase is a heterohexamer composed of biotin carboxyl carrier protein (AccB), biotin carboxylase (AccC) and two subunits each of ACCase subunit alpha (AccA) and ACCase subunit beta (AccD).

It localises to the cytoplasm. It catalyses the reaction N(6)-carboxybiotinyl-L-lysyl-[protein] + acetyl-CoA = N(6)-biotinyl-L-lysyl-[protein] + malonyl-CoA. It functions in the pathway lipid metabolism; malonyl-CoA biosynthesis; malonyl-CoA from acetyl-CoA: step 1/1. In terms of biological role, component of the acetyl coenzyme A carboxylase (ACC) complex. First, biotin carboxylase catalyzes the carboxylation of biotin on its carrier protein (BCCP) and then the CO(2) group is transferred by the carboxyltransferase to acetyl-CoA to form malonyl-CoA. The sequence is that of Acetyl-coenzyme A carboxylase carboxyl transferase subunit alpha from Staphylococcus epidermidis (strain ATCC 12228 / FDA PCI 1200).